Here is a 232-residue protein sequence, read N- to C-terminus: RNA chaperone ProQ (232 aa).

The tract at residues Glu-105–Asp-182 is disordered. Basic and acidic residues predominate over residues Gln-117–Arg-136. The segment covering Arg-137–Pro-146 has biased composition (basic residues). A compositionally biased stretch (basic and acidic residues) spans Arg-147–His-177.

Belongs to the ProQ family.

The protein localises to the cytoplasm. Functionally, RNA chaperone with significant RNA binding, RNA strand exchange and RNA duplexing activities. May regulate ProP activity through an RNA-based, post-transcriptional mechanism. This Shigella boydii serotype 18 (strain CDC 3083-94 / BS512) protein is RNA chaperone ProQ.